A 172-amino-acid chain; its full sequence is uncharacterized protein (172 aa).

3 helical membrane passes run 7-27 (ILISYVGLIKLALAGILCYGI), 59-79 (LMIFLAFGFPIFFIGSFLYLF), and 89-109 (FSLTFAITFFVLFIFGLLFVK).

To M.jannaschii MJ0695.

It is found in the cell membrane. This is an uncharacterized protein from Methanocaldococcus jannaschii (strain ATCC 43067 / DSM 2661 / JAL-1 / JCM 10045 / NBRC 100440) (Methanococcus jannaschii).